Here is a 138-residue protein sequence, read N- to C-terminus: ATP synthase epsilon chain (138 aa).

It belongs to the ATPase epsilon chain family. As to quaternary structure, F-type ATPases have 2 components, CF(1) - the catalytic core - and CF(0) - the membrane proton channel. CF(1) has five subunits: alpha(3), beta(3), gamma(1), delta(1), epsilon(1). CF(0) has three main subunits: a, b and c.

Its subcellular location is the cellular thylakoid membrane. Functionally, produces ATP from ADP in the presence of a proton gradient across the membrane. This Synechococcus sp. (strain PCC 6716) protein is ATP synthase epsilon chain (atpC).